The chain runs to 107 residues: Small integral membrane protein 19 (107 aa).

Residues 25–43 (ATNVYLIVILVSFGLFMYA) traverse the membrane as a helical segment. Residues 88-107 (RKYEYQQPQSQADSVQLSLE) form a disordered region. Over residues 93–107 (QQPQSQADSVQLSLE) the composition is skewed to polar residues.

This sequence belongs to the SMIM19 family.

It localises to the membrane. This chain is Small integral membrane protein 19 (Smim19), found in Mus musculus (Mouse).